Here is a 1233-residue protein sequence, read N- to C-terminus: ATP-dependent helicase/nuclease subunit A (1233 aa).

The UvrD-like helicase ATP-binding domain occupies 3–474; it reads TKWTEEQKQA…ILLYKNFRSR (472 aa). Position 24–31 (24–31) interacts with ATP; it reads AAAGSGKT. Residues 518 to 809 enclose the UvrD-like helicase C-terminal domain; the sequence is VTGGAVELHL…RIMSIHKSKG (292 aa). Residues 533 to 555 are disordered; sequence VEEEVEEKEEEKNEEKDFEEEEE.

It belongs to the helicase family. AddA subfamily. Heterodimer of AddA and AddB/RexB. Mg(2+) is required as a cofactor.

The catalysed reaction is Couples ATP hydrolysis with the unwinding of duplex DNA by translocating in the 3'-5' direction.. It catalyses the reaction ATP + H2O = ADP + phosphate + H(+). In terms of biological role, the heterodimer acts as both an ATP-dependent DNA helicase and an ATP-dependent, dual-direction single-stranded exonuclease. Recognizes the chi site generating a DNA molecule suitable for the initiation of homologous recombination. The AddA nuclease domain is required for chi fragment generation; this subunit has the helicase and 3' -&gt; 5' nuclease activities. The sequence is that of ATP-dependent helicase/nuclease subunit A from Thermoanaerobacter pseudethanolicus (strain ATCC 33223 / 39E) (Clostridium thermohydrosulfuricum).